We begin with the raw amino-acid sequence, 394 residues long: Putative pectate lyase 17 (394 aa).

An N-terminal signal peptide occupies residues 1–22 (MTHFTVSCLLVALFLCQSLVHA). The Ca(2+) site is built by Asp192, Asp216, and Asp220. Residue Arg272 is part of the active site.

It belongs to the polysaccharide lyase 1 family. The cofactor is Ca(2+).

It carries out the reaction Eliminative cleavage of (1-&gt;4)-alpha-D-galacturonan to give oligosaccharides with 4-deoxy-alpha-D-galact-4-enuronosyl groups at their non-reducing ends.. It functions in the pathway glycan metabolism; pectin degradation; 2-dehydro-3-deoxy-D-gluconate from pectin: step 2/5. This is Putative pectate lyase 17 from Arabidopsis thaliana (Mouse-ear cress).